We begin with the raw amino-acid sequence, 212 residues long: MKGKFIVIEGIDGCGKTTQIDELSKWLPISGLLKKESKLITTREPGGSLLGKKLRRLILDNNENNKPSSLAELLLYSADRAEHVSKIILPALNNNDWVISDRFSDSTLAYQGYGRNINLEIIKNIESIVCQGASPDLTFFLEISPEESIFRRKNEIPDRIESEGIRFLERVNEGFKLIAKQKNWKVISASQNIKTISNQIKETLLNNFSNAK.

10 to 17 is an ATP binding site; sequence GIDGCGKT.

Belongs to the thymidylate kinase family.

The catalysed reaction is dTMP + ATP = dTDP + ADP. In terms of biological role, phosphorylation of dTMP to form dTDP in both de novo and salvage pathways of dTTP synthesis. The sequence is that of Thymidylate kinase from Prochlorococcus marinus (strain MIT 9301).